The chain runs to 647 residues: Threonine--tRNA ligase (647 aa).

A TGS domain is found at 1-61 (MIKITFPDGA…EEDGSIEIVT (61 aa)). Residues 240-538 (DHRKLGKELD…LIETYKGAFP (299 aa)) form a catalytic region. Positions 334, 385, and 515 each coordinate Zn(2+).

Belongs to the class-II aminoacyl-tRNA synthetase family. As to quaternary structure, homodimer. It depends on Zn(2+) as a cofactor.

Its subcellular location is the cytoplasm. It carries out the reaction tRNA(Thr) + L-threonine + ATP = L-threonyl-tRNA(Thr) + AMP + diphosphate + H(+). Its function is as follows. Catalyzes the attachment of threonine to tRNA(Thr) in a two-step reaction: L-threonine is first activated by ATP to form Thr-AMP and then transferred to the acceptor end of tRNA(Thr). Also edits incorrectly charged L-seryl-tRNA(Thr). The polypeptide is Threonine--tRNA ligase (Streptococcus pyogenes serotype M28 (strain MGAS6180)).